Reading from the N-terminus, the 256-residue chain is 1-(5-phosphoribosyl)-5-[(5-phosphoribosylamino)methylideneamino] imidazole-4-carboxamide isomerase (256 aa).

The active-site Proton acceptor is Asp8. Asp129 (proton donor) is an active-site residue.

Belongs to the HisA/HisF family.

The protein resides in the cytoplasm. It catalyses the reaction 1-(5-phospho-beta-D-ribosyl)-5-[(5-phospho-beta-D-ribosylamino)methylideneamino]imidazole-4-carboxamide = 5-[(5-phospho-1-deoxy-D-ribulos-1-ylimino)methylamino]-1-(5-phospho-beta-D-ribosyl)imidazole-4-carboxamide. Its pathway is amino-acid biosynthesis; L-histidine biosynthesis; L-histidine from 5-phospho-alpha-D-ribose 1-diphosphate: step 4/9. This chain is 1-(5-phosphoribosyl)-5-[(5-phosphoribosylamino)methylideneamino] imidazole-4-carboxamide isomerase, found in Syntrophobacter fumaroxidans (strain DSM 10017 / MPOB).